The following is a 202-amino-acid chain: Probable molybdenum cofactor guanylyltransferase (202 aa).

Residues 13-15 (LAG), Lys25, Asp71, and Asp103 each bind GTP. Residue Asp103 coordinates Mg(2+).

It belongs to the MobA family. Mg(2+) serves as cofactor.

It is found in the cytoplasm. It carries out the reaction Mo-molybdopterin + GTP + H(+) = Mo-molybdopterin guanine dinucleotide + diphosphate. In terms of biological role, transfers a GMP moiety from GTP to Mo-molybdopterin (Mo-MPT) cofactor (Moco or molybdenum cofactor) to form Mo-molybdopterin guanine dinucleotide (Mo-MGD) cofactor. The sequence is that of Probable molybdenum cofactor guanylyltransferase from Opitutus terrae (strain DSM 11246 / JCM 15787 / PB90-1).